Here is a 326-residue protein sequence, read N- to C-terminus: Pyruvate dehydrogenase E1 component subunit alpha (326 aa).

In terms of assembly, heterodimer of an alpha and a beta chain. The cofactor is thiamine diphosphate.

It catalyses the reaction N(6)-[(R)-lipoyl]-L-lysyl-[protein] + pyruvate + H(+) = N(6)-[(R)-S(8)-acetyldihydrolipoyl]-L-lysyl-[protein] + CO2. Its function is as follows. The pyruvate dehydrogenase complex catalyzes the overall conversion of pyruvate to acetyl-CoA and CO(2). It contains multiple copies of three enzymatic components: pyruvate dehydrogenase (E1), dihydrolipoamide acetyltransferase (E2) and lipoamide dehydrogenase (E3). This Rickettsia typhi (strain ATCC VR-144 / Wilmington) protein is Pyruvate dehydrogenase E1 component subunit alpha (pdhA).